Reading from the N-terminus, the 299-residue chain is Coenzyme PQQ synthesis protein B (299 aa).

This sequence belongs to the PqqB family.

The protein operates within cofactor biosynthesis; pyrroloquinoline quinone biosynthesis. May be involved in the transport of PQQ or its precursor to the periplasm. The chain is Coenzyme PQQ synthesis protein B from Methylobacterium nodulans (strain LMG 21967 / CNCM I-2342 / ORS 2060).